The sequence spans 728 residues: Polyphosphate kinase (728 aa).

N57 lines the ATP pocket. 2 residues coordinate Mg(2+): R408 and R438. The active-site Phosphohistidine intermediate is H468. Positions 501, 597, and 625 each coordinate ATP. The tract at residues 694–728 is disordered; the sequence is VQRRPASPEQSQSSQAIFTAQAIAETTEDPELRSV. A compositionally biased stretch (low complexity) spans 695–709; that stretch reads QRRPASPEQSQSSQA.

This sequence belongs to the polyphosphate kinase 1 (PPK1) family. The cofactor is Mg(2+). An intermediate of this reaction is the autophosphorylated ppk in which a phosphate is covalently linked to a histidine residue through a N-P bond.

It carries out the reaction [phosphate](n) + ATP = [phosphate](n+1) + ADP. Its function is as follows. Catalyzes the reversible transfer of the terminal phosphate of ATP to form a long-chain polyphosphate (polyP). The chain is Polyphosphate kinase from Synechocystis sp. (strain ATCC 27184 / PCC 6803 / Kazusa).